A 169-amino-acid chain; its full sequence is Crossover junction endodeoxyribonuclease RuvC (169 aa).

Active-site residues include D7, E67, and D139. Positions 7, 67, and 139 each coordinate Mg(2+).

Belongs to the RuvC family. In terms of assembly, homodimer which binds Holliday junction (HJ) DNA. The HJ becomes 2-fold symmetrical on binding to RuvC with unstacked arms; it has a different conformation from HJ DNA in complex with RuvA. In the full resolvosome a probable DNA-RuvA(4)-RuvB(12)-RuvC(2) complex forms which resolves the HJ. Mg(2+) is required as a cofactor.

The protein resides in the cytoplasm. The enzyme catalyses Endonucleolytic cleavage at a junction such as a reciprocal single-stranded crossover between two homologous DNA duplexes (Holliday junction).. Functionally, the RuvA-RuvB-RuvC complex processes Holliday junction (HJ) DNA during genetic recombination and DNA repair. Endonuclease that resolves HJ intermediates. Cleaves cruciform DNA by making single-stranded nicks across the HJ at symmetrical positions within the homologous arms, yielding a 5'-phosphate and a 3'-hydroxyl group; requires a central core of homology in the junction. The consensus cleavage sequence is 5'-(A/T)TT(C/G)-3'. Cleavage occurs on the 3'-side of the TT dinucleotide at the point of strand exchange. HJ branch migration catalyzed by RuvA-RuvB allows RuvC to scan DNA until it finds its consensus sequence, where it cleaves and resolves the cruciform DNA. In Rhodospirillum rubrum (strain ATCC 11170 / ATH 1.1.1 / DSM 467 / LMG 4362 / NCIMB 8255 / S1), this protein is Crossover junction endodeoxyribonuclease RuvC.